A 184-amino-acid chain; its full sequence is UPF0397 protein SAS2570 (184 aa).

The next 5 helical transmembrane spans lie at 11 to 31, 44 to 64, 77 to 97, 111 to 131, and 148 to 168; these read VVAIGIGAAVFVILGRFVVIP, AFLALISAIFGPFAGLMTGLV, AWWSWVICSGIIGCLYGWIGL, MIYFNIGQIIANIICWALIAP, and QGVISAVLNIISVGIIGTILL.

Belongs to the UPF0397 family.

The protein resides in the cell membrane. This chain is UPF0397 protein SAS2570, found in Staphylococcus aureus (strain MSSA476).